The chain runs to 117 residues: Large ribosomal subunit protein uL18 (117 aa).

Belongs to the universal ribosomal protein uL18 family. Part of the 50S ribosomal subunit; part of the 5S rRNA/L5/L18/L25 subcomplex. Contacts the 5S and 23S rRNAs.

In terms of biological role, this is one of the proteins that bind and probably mediate the attachment of the 5S RNA into the large ribosomal subunit, where it forms part of the central protuberance. The sequence is that of Large ribosomal subunit protein uL18 from Mannheimia succiniciproducens (strain KCTC 0769BP / MBEL55E).